Here is a 539-residue protein sequence, read N- to C-terminus: uncharacterized protein (539 aa).

Ser216 (acyl-ester intermediate) is an active-site residue.

This sequence belongs to the type-B carboxylesterase/lipase family.

The protein resides in the cytoplasm. Its subcellular location is the nucleus. This is an uncharacterized protein from Schizosaccharomyces pombe (strain 972 / ATCC 24843) (Fission yeast).